Reading from the N-terminus, the 145-residue chain is Superoxide dismutase [Mn/Fe] (145 aa).

Residues His10 and His64 each contribute to the Fe(3+) site. Residues His10 and His64 each contribute to the Mn(2+) site.

It belongs to the iron/manganese superoxide dismutase family. Mn(2+) serves as cofactor. Fe(3+) is required as a cofactor.

The enzyme catalyses 2 superoxide + 2 H(+) = H2O2 + O2. Functionally, destroys superoxide anion radicals which are normally produced within the cells and which are toxic to biological systems. Catalyzes the dismutation of superoxide anion radicals into O2 and H2O2 by successive reduction and oxidation of the transition metal ion at the active site. This Streptococcus canis protein is Superoxide dismutase [Mn/Fe] (sodA).